Consider the following 223-residue polypeptide: N-terminal Xaa-Pro-Lys N-methyltransferase 1 (223 aa).

Met1 carries the N-acetylmethionine modification. Thr2 carries the post-translational modification N-acetylthreonine; in N-terminal Xaa-Pro-Lys N-methyltransferase 1, N-terminally processed. S-adenosyl-L-methionine-binding positions include Gly69, Arg74, 91–93 (DIT), 119–120 (LQ), and Gln135.

Belongs to the methyltransferase superfamily. NTM1 family.

The protein resides in the nucleus. It catalyses the reaction N-terminal L-alanyl-L-prolyl-L-lysyl-[protein] + 3 S-adenosyl-L-methionine = N-terminal N,N,N-trimethyl-L-alanyl-L-prolyl-L-lysyl-[protein] + 3 S-adenosyl-L-homocysteine + 3 H(+). The catalysed reaction is N-terminal L-seryl-L-prolyl-L-lysyl-[protein] + 3 S-adenosyl-L-methionine = N-terminal N,N,N-trimethyl-L-seryl-L-prolyl-L-lysyl-[protein] + 3 S-adenosyl-L-homocysteine + 3 H(+). The enzyme catalyses N-terminal L-prolyl-L-prolyl-L-lysyl-[protein] + 2 S-adenosyl-L-methionine = N-terminal N,N-dimethyl-L-prolyl-L-prolyl-L-lysyl-[protein] + 2 S-adenosyl-L-homocysteine + 2 H(+). In terms of biological role, distributive alpha-N-methyltransferase that methylates the N-terminus of target proteins containing the N-terminal motif [Ala/Gly/Pro/Ser]-Pro-Lys when the initiator Met is cleaved. Specifically catalyzes mono-, di- or tri-methylation of the exposed alpha-amino group of the Ala, Gly or Ser residue in the [Ala/Gly/Ser]-Pro-Lys motif and mono- or di-methylation of Pro in the Pro-Pro-Lys motif. Some of the substrates may be primed by NTMT2-mediated monomethylation. Catalyzes the trimethylation of the N-terminal Gly in CENPA (after removal of Met-1). Responsible for the N-terminal methylation of KLHL31, MYL2, MYL3, RB1, RCC1, RPL23A and SET. Required during mitosis for normal bipolar spindle formation and chromosome segregation via its action on RCC1. The protein is N-terminal Xaa-Pro-Lys N-methyltransferase 1 (NTMT1) of Homo sapiens (Human).